The chain runs to 234 residues: UPF0502 protein Reut_B4455 (234 aa).

This sequence belongs to the UPF0502 family.

The chain is UPF0502 protein Reut_B4455 from Cupriavidus pinatubonensis (strain JMP 134 / LMG 1197) (Cupriavidus necator (strain JMP 134)).